A 271-amino-acid polypeptide reads, in one-letter code: Dihydropteroate synthase type-2 (271 aa).

A Pterin-binding domain is found at 1 to 259 (MNKSLIIFGI…EPRPLRDGLA (259 aa)). Residue N12 participates in 4-aminobenzoate binding. Positions 12, 18, 51, and 52 each coordinate diphosphate. N12 is a Mg(2+) binding site. S52, D85, N104, D174, F179, K213, and S214 together coordinate 7,8-dihydropteroate. (7,8-dihydropterin-6-yl)methyl diphosphate contacts are provided by D85, N104, and D174. Positions 104 and 174 each coordinate 6-hydroxymethyl-7,8-dihydropterin. K213 contributes to the (7,8-dihydropterin-6-yl)methyl diphosphate binding site. K213 lines the 6-hydroxymethyl-7,8-dihydropterin pocket. A 4-aminobenzoate-binding site is contributed by R247. Residues R247 and H249 each coordinate diphosphate. 247–249 (RTH) contacts (7,8-dihydropterin-6-yl)methyl diphosphate.

This sequence belongs to the DHPS family. As to quaternary structure, homodimer. Requires Mg(2+) as cofactor.

The enzyme catalyses (7,8-dihydropterin-6-yl)methyl diphosphate + 4-aminobenzoate = 7,8-dihydropteroate + diphosphate. Its pathway is cofactor biosynthesis; tetrahydrofolate biosynthesis; 7,8-dihydrofolate from 2-amino-4-hydroxy-6-hydroxymethyl-7,8-dihydropteridine diphosphate and 4-aminobenzoate: step 1/2. Catalyzes the condensation of para-aminobenzoate (pABA) with 6-hydroxymethyl-7,8-dihydropterin diphosphate (DHPt-PP) to form 7,8-dihydropteroate (H2Pte), the immediate precursor of folate derivatives. Confers resistance to sulfonamide antibiotics, including sulfamethoxazole (SMX), sulfadiazine and sulfisoxazole. The type II enzyme is stable whereas type I DHPS loses its activity rapidly. This Escherichia coli protein is Dihydropteroate synthase type-2.